We begin with the raw amino-acid sequence, 185 residues long: MLTLASKLKRDDGLKGSRASATASDSTRRVSVRDRLLVKEVAELEANLPCTCKVHFPDPNKLHCFQLTVTPDEGYYQGGKFQFETEVPDAYNMVPPKVKCLTRIWHPNITETGEICLSLLREHSIDGTGWAPTRTLKDVVWGLNSLFTDLLNFDDPLNIEAAEHHLRDKEDFRNKVEDYIKRYAR.

At Met1 the chain carries N-acetylmethionine. Residues 1–29 (MLTLASKLKRDDGLKGSRASATASDSTRR) form an interaction with UBA3 region. Residues 32–185 (VRDRLLVKEV…VEDYIKRYAR (154 aa)) form the UBC core domain. Cys116 functions as the Glycyl thioester intermediate in the catalytic mechanism.

Belongs to the ubiquitin-conjugating enzyme family. UBE2F subfamily. In terms of assembly, interacts with UBA3 and RBX2. Interacts (N-terminally acetylated form) with (via DCUN1 domain) DCUN1D1, DCUN1D2, DCUN1D3, DCUN1D4 and DCUN1D5. Post-translationally, the acetylation of Met-1 increases affinity for DCUN1D3 by about 2 orders of magnitude and is crucial for NEDD8 transfer to cullins.

It catalyses the reaction [E1 NEDD8-activating enzyme]-S-[NEDD8 protein]-yl-L-cysteine + [E2 NEDD8-conjugating enzyme]-L-cysteine = [E1 NEDD8-activating enzyme]-L-cysteine + [E2 NEDD8-conjugating enzyme]-S-[NEDD8-protein]-yl-L-cysteine.. It participates in protein modification; protein neddylation. Its function is as follows. Accepts the ubiquitin-like protein NEDD8 from the UBA3-NAE1 E1 complex and catalyzes its covalent attachment to other proteins. Together with the E3 ubiquitin ligase RNF7/RBX2, specifically neddylates cullin-5 (CUL5). Does not neddylate CUL1, CUL2, CUL3, CUL4A or CUL4B. Mediates neddylation of the CUL9-RBX1 complex. In Bos taurus (Bovine), this protein is NEDD8-conjugating enzyme UBE2F (UBE2F).